Here is a 456-residue protein sequence, read N- to C-terminus: Bifunctional protein GlmU (456 aa).

The tract at residues 1–229 (MLNNAMSVVI…LSEVEGVNNR (229 aa)) is pyrophosphorylase. Residues 11 to 14 (LAAG), lysine 25, glutamine 76, 81 to 82 (GT), 103 to 105 (YGD), glycine 140, glutamate 154, asparagine 169, and asparagine 227 contribute to the UDP-N-acetyl-alpha-D-glucosamine site. Mg(2+) is bound at residue aspartate 105. Position 227 (asparagine 227) interacts with Mg(2+). Positions 230–250 (LQLSRLERVYQSEQAEKLLLA) are linker. The N-acetyltransferase stretch occupies residues 251 to 456 (GVMLRDPARF…EGWRRPVKKK (206 aa)). UDP-N-acetyl-alpha-D-glucosamine is bound by residues arginine 333 and lysine 351. Histidine 363 serves as the catalytic Proton acceptor. Residues tyrosine 366 and asparagine 377 each coordinate UDP-N-acetyl-alpha-D-glucosamine. Acetyl-CoA is bound by residues alanine 380, 386–387 (NY), serine 405, alanine 423, and arginine 440.

The protein in the N-terminal section; belongs to the N-acetylglucosamine-1-phosphate uridyltransferase family. This sequence in the C-terminal section; belongs to the transferase hexapeptide repeat family. In terms of assembly, homotrimer. Requires Mg(2+) as cofactor.

The protein resides in the cytoplasm. The catalysed reaction is alpha-D-glucosamine 1-phosphate + acetyl-CoA = N-acetyl-alpha-D-glucosamine 1-phosphate + CoA + H(+). It catalyses the reaction N-acetyl-alpha-D-glucosamine 1-phosphate + UTP + H(+) = UDP-N-acetyl-alpha-D-glucosamine + diphosphate. The protein operates within nucleotide-sugar biosynthesis; UDP-N-acetyl-alpha-D-glucosamine biosynthesis; N-acetyl-alpha-D-glucosamine 1-phosphate from alpha-D-glucosamine 6-phosphate (route II): step 2/2. It participates in nucleotide-sugar biosynthesis; UDP-N-acetyl-alpha-D-glucosamine biosynthesis; UDP-N-acetyl-alpha-D-glucosamine from N-acetyl-alpha-D-glucosamine 1-phosphate: step 1/1. It functions in the pathway bacterial outer membrane biogenesis; LPS lipid A biosynthesis. In terms of biological role, catalyzes the last two sequential reactions in the de novo biosynthetic pathway for UDP-N-acetylglucosamine (UDP-GlcNAc). The C-terminal domain catalyzes the transfer of acetyl group from acetyl coenzyme A to glucosamine-1-phosphate (GlcN-1-P) to produce N-acetylglucosamine-1-phosphate (GlcNAc-1-P), which is converted into UDP-GlcNAc by the transfer of uridine 5-monophosphate (from uridine 5-triphosphate), a reaction catalyzed by the N-terminal domain. This chain is Bifunctional protein GlmU, found in Escherichia fergusonii (strain ATCC 35469 / DSM 13698 / CCUG 18766 / IAM 14443 / JCM 21226 / LMG 7866 / NBRC 102419 / NCTC 12128 / CDC 0568-73).